The following is a 459-amino-acid chain: Cyclooctatin synthase (459 aa).

Position 408 (Cys-408) interacts with heme.

This sequence belongs to the cytochrome P450 family. Requires heme as cofactor.

The catalysed reaction is cyclooctat-9-ene-5,7-diol + AH2 + O2 = cyclooctatin + A + H2O. Functionally, involved in the biosynthesis of cyclooctatin, a potent inhibitor of lysophospholipase. Catalyzes the hydroxylation of cyclooctat-9-ene-5,7-diol at C-18 to yield the final product, cyclooctatin. The polypeptide is Cyclooctatin synthase (Streptomyces melanosporofaciens).